A 327-amino-acid chain; its full sequence is Cytochrome f (327 aa).

Positions 1-24 (MKRIYLALCALLLLLGTGSRPAAA) are cleaved as a signal peptide. Positions 25, 45, 48, and 49 each coordinate heme. Residues 293 to 313 (VKWLVAFLAAVAITQLLLVLK) traverse the membrane as a helical segment.

It belongs to the cytochrome f family. In terms of assembly, the 4 large subunits of the cytochrome b6-f complex are cytochrome b6, subunit IV (17 kDa polypeptide, PetD), cytochrome f and the Rieske protein, while the 4 small subunits are PetG, PetL, PetM and PetN. The complex functions as a dimer. The cofactor is heme.

Its subcellular location is the cellular thylakoid membrane. Its function is as follows. Component of the cytochrome b6-f complex, which mediates electron transfer between photosystem II (PSII) and photosystem I (PSI), cyclic electron flow around PSI, and state transitions. The chain is Cytochrome f from Synechococcus sp. (strain JA-3-3Ab) (Cyanobacteria bacterium Yellowstone A-Prime).